The chain runs to 255 residues: Pimeloyl-[acyl-carrier protein] methyl ester esterase (255 aa).

The AB hydrolase-1 domain maps to 16–242 (LVLLHGWGLN…AAHAPFISHP (227 aa)). Substrate-binding positions include Trp22, 82–83 (SL), and 143–147 (FLALQ). The Nucleophile role is filled by Ser82. Residues Asp207 and His235 contribute to the active site. His235 is a substrate binding site.

Belongs to the AB hydrolase superfamily. Carboxylesterase BioH family. Monomer.

It localises to the cytoplasm. The enzyme catalyses 6-carboxyhexanoyl-[ACP] methyl ester + H2O = 6-carboxyhexanoyl-[ACP] + methanol + H(+). It functions in the pathway cofactor biosynthesis; biotin biosynthesis. The physiological role of BioH is to remove the methyl group introduced by BioC when the pimeloyl moiety is complete. It allows to synthesize pimeloyl-ACP via the fatty acid synthetic pathway through the hydrolysis of the ester bonds of pimeloyl-ACP esters. This is Pimeloyl-[acyl-carrier protein] methyl ester esterase from Pectobacterium atrosepticum (strain SCRI 1043 / ATCC BAA-672) (Erwinia carotovora subsp. atroseptica).